We begin with the raw amino-acid sequence, 271 residues long: Metal-staphylopine import system ATP-binding protein CntD (271 aa).

The ABC transporter domain maps to 6-251 (VKHLTITDTW…PEHVYTKYLL (246 aa)). Residue 38 to 45 (GESGSGKS) coordinates ATP.

The protein belongs to the ABC transporter superfamily. In terms of assembly, the complex is composed of two ATP-binding proteins (CntD and CntF), two transmembrane proteins (CntB and CntC) and a solute-binding protein (CntA).

Its subcellular location is the cell membrane. Its activity is regulated as follows. Nickel/cobalt import is reduced in the presence of zinc. Functionally, part of the ABC transporter complex CntABCDF (Opp1) involved in the uptake of metal in complex with the metallophore staphylopine (StP). Involved in the import of divalent metals ions such as nickel, cobalt and zinc. Probably responsible for energy coupling to the transport system. Plays a major role in nickel/cobalt import in zinc-depleted conditions. Contributes to virulence. Required for full urease activity in vitro. In Staphylococcus aureus (strain NCTC 8325 / PS 47), this protein is Metal-staphylopine import system ATP-binding protein CntD.